A 67-amino-acid polypeptide reads, in one-letter code: Guanine nucleotide-binding protein G(I)/G(S)/G(O) subunit gamma-13 (67 aa).

The residue at position 64 (cysteine 64) is a Cysteine methyl ester. Cysteine 64 carries S-farnesyl cysteine lipidation. Positions 65 to 67 (TIL) are cleaved as a propeptide — removed in mature form.

Belongs to the G protein gamma family. In terms of assembly, g proteins are composed of 3 units, alpha, beta and gamma.

It is found in the cell membrane. Guanine nucleotide-binding proteins (G proteins) are involved as a modulator or transducer in various transmembrane signaling systems. The beta and gamma chains are required for the GTPase activity, for replacement of GDP by GTP, and for G protein-effector interaction. The sequence is that of Guanine nucleotide-binding protein G(I)/G(S)/G(O) subunit gamma-13 (Gng13) from Mus musculus (Mouse).